Here is a 138-residue protein sequence, read N- to C-terminus: MVNDTISDMLTRIRNANLAKKTSVSLPKTKVHEKMCQILEQEGFIKTFSFSETNTNELIVDLKYQDFASFGNYGVGKPCITNLKRISKPGLRIYTNSREIPKVLGGMGILILSTSKGLMTDRQARKLCLGGEILCSVW.

Belongs to the universal ribosomal protein uS8 family. In terms of assembly, part of the 30S ribosomal subunit.

The protein resides in the plastid. The protein localises to the chloroplast. Functionally, one of the primary rRNA binding proteins, it binds directly to 16S rRNA central domain where it helps coordinate assembly of the platform of the 30S subunit. This Chlorella vulgaris (Green alga) protein is Small ribosomal subunit protein uS8c (rps8).